The following is a 235-amino-acid chain: uncharacterized protein (235 aa).

Residues 27–47 (AMKLWSTWITLLILTFFCSEC) form a helical membrane-spanning segment. The region spanning 124–185 (YFWGESKYVP…CCGYDCCSNS (62 aa)) is the CX domain. Residues 187 to 207 (IFTSIFSLLVILLIVSVLSIF) traverse the membrane as a helical segment.

The protein localises to the membrane. This is an uncharacterized protein from Caenorhabditis elegans.